A 361-amino-acid chain; its full sequence is Mitogen-activated protein kinase 14A (361 aa).

One can recognise a Protein kinase domain in the interval 25–309; that stretch reads YQNLSPVGSG…AAEALAHPYF (285 aa). Residues 31-39 and lysine 54 each bind ATP; that span reads VGSGAYGSV. The active-site Proton acceptor is aspartate 169. The residue at position 181 (threonine 181) is a Phosphothreonine; by MAP2K3. The TXY signature appears at 181–183; the sequence is TGY. The residue at position 183 (tyrosine 183) is a Phosphotyrosine; by MAP2K3.

This sequence belongs to the protein kinase superfamily. CMGC Ser/Thr protein kinase family. MAP kinase subfamily. Mg(2+) serves as cofactor. Dually phosphorylated on Thr-181 and Tyr-183, which activates the enzyme.

It localises to the cytoplasm. The protein localises to the nucleus. It carries out the reaction L-seryl-[protein] + ATP = O-phospho-L-seryl-[protein] + ADP + H(+). It catalyses the reaction L-threonyl-[protein] + ATP = O-phospho-L-threonyl-[protein] + ADP + H(+). Activated by threonine and tyrosine phosphorylation by the dual specificity kinase, MKK3. Serine/threonine kinase which acts as an essential component of the MAP kinase signal transduction pathway. Mapk14a is one of the four p38 MAPKs which play an important role in the cascades of cellular responses evoked by extracellular stimuli such as pro-inflammatory cytokines or physical stress leading to direct activation of transcription factors. Accordingly, p38 MAPKs phosphorylate a broad range of proteins and it has been estimated that they may have approximately 200 to 300 substrates each. Some of the targets are downstream kinases which are activated through phosphorylation and further phosphorylate additional targets. Required for cytokinesis on the future dorsal side of the blastodisc, suggesting a role in symmetrical and synchronous blastomere cleavage. The chain is Mitogen-activated protein kinase 14A (mapk14a) from Danio rerio (Zebrafish).